Reading from the N-terminus, the 360-residue chain is Alpha-2-HS-glycoprotein (360 aa).

An N-terminal signal peptide occupies residues 1 to 15; it reads LVLLLSLAQLWSCHL. One can recognise a Cystatin fetuin-A-type 1 domain in the interval 24–130; that stretch reads YREHNCDDPE…QFTVLSAKCD (107 aa). 6 cysteine pairs are disulfide-bonded: C29–C351, C86–C97, C111–C129, C143–C146, C205–C216, and C227–C244. The N-linked (GlcNAc...) asparagine glycan is linked to N96. S131 carries the phosphoserine modification. The residue at position 132 (T132) is a Phosphothreonine. S135 carries the phosphoserine modification. Residues 141-252 enclose the Cystatin fetuin-A-type 2 domain; it reads KLCPDCPLLT…TCTIFPAQPV (112 aa). An N-linked (GlcNAc...) asparagine glycan is attached at N153. The interval 260–285 is disordered; it reads VAGAAAVEPAPAVDPASPVSPPDGQS. A Phosphothreonine modification is found at T312. Phosphoserine is present on residues S318, S321, and S323.

It belongs to the fetuin family. Phosphorylated by FAM20C in the extracellular medium. Bone marrow.

The protein localises to the secreted. In terms of biological role, a cell adhesion protein that binds immature cells of the granulocyte lineage. This Oryctolagus cuniculus (Rabbit) protein is Alpha-2-HS-glycoprotein (AHSG).